Consider the following 119-residue polypeptide: MSLTSRASARKRRHVRLRKKISGTCDRPRLSVTRSNRHVFVQAVDDISGKTLVSASTMEKDIRALELGKTERALAVGKLVAQRALAVGVKSAVFDRGGCKYTGRVAAVAEGAREAGLQT.

This sequence belongs to the universal ribosomal protein uL18 family. In terms of assembly, part of the 50S ribosomal subunit; part of the 5S rRNA/L5/L18/L25 subcomplex. Contacts the 5S and 23S rRNAs.

In terms of biological role, this is one of the proteins that bind and probably mediate the attachment of the 5S RNA into the large ribosomal subunit, where it forms part of the central protuberance. This is Large ribosomal subunit protein uL18 from Tropheryma whipplei (strain TW08/27) (Whipple's bacillus).